The primary structure comprises 172 residues: uncharacterized protein (172 aa).

A Ferritin-like diiron domain is found at 1–148; that stretch reads MANSQKVIDV…TIHDFFENGN (148 aa).

This is an uncharacterized protein from Ureaplasma urealyticum (Ureaplasma urealyticum biotype 2).